The primary structure comprises 125 residues: Oxytocin-neurophysin 1 (125 aa).

Positions 1-19 are cleaved as a signal peptide; the sequence is MAGSSLACCLLGLLALTSA. An intrachain disulfide couples Cys20 to Cys25. Gly28 bears the Glycine amide mark. Disulfide bonds link Cys41–Cys85, Cys44–Cys58, Cys52–Cys75, Cys59–Cys65, Cys92–Cys104, Cys98–Cys116, and Cys105–Cys110.

The protein belongs to the vasopressin/oxytocin family. As to quaternary structure, interacts with oxytocin receptor (Ki=1.5 nM). Interacts with vasopressin V1aR/AVPR1A (Ki=37 nM), V1bR/AVPR1B (Ki=222 nM), and V2R/AVPR2 receptors (Ki=823 nM).

The protein resides in the secreted. Its function is as follows. Neurophysin 1 specifically binds oxytocin. Functionally, oxytocin causes contraction of the smooth muscle of the uterus and of the mammary gland. Acts by binding to oxytocin receptor (OXTR). This Bos taurus (Bovine) protein is Oxytocin-neurophysin 1 (OXT).